A 172-amino-acid polypeptide reads, in one-letter code: MLPMITGFMNYGQQTLRAARYIGQGFMITLSHTNRLPVTIQYPYEKLITSERFRGRIHFEFDKCIACEVCVRVCPIDLPVVDWKLETNIRKKRLLNYSIDFGICIFCGNCVEYCPTNCLSMTEEYEFSTYDRHELNYNQIALGRLPMSVIDDYTIRTIWNSPQTKNGVNPLI.

2 consecutive 4Fe-4S ferredoxin-type domains span residues 55-84 and 95-124; these read GRIH…VDWK and LNYS…MTEE. [4Fe-4S] cluster contacts are provided by Cys-64, Cys-67, Cys-70, Cys-74, Cys-104, Cys-107, Cys-110, and Cys-114.

This sequence belongs to the complex I 23 kDa subunit family. In terms of assembly, NDH is composed of at least 16 different subunits, 5 of which are encoded in the nucleus. [4Fe-4S] cluster serves as cofactor.

The protein localises to the plastid. The protein resides in the chloroplast thylakoid membrane. It carries out the reaction a plastoquinone + NADH + (n+1) H(+)(in) = a plastoquinol + NAD(+) + n H(+)(out). The catalysed reaction is a plastoquinone + NADPH + (n+1) H(+)(in) = a plastoquinol + NADP(+) + n H(+)(out). In terms of biological role, NDH shuttles electrons from NAD(P)H:plastoquinone, via FMN and iron-sulfur (Fe-S) centers, to quinones in the photosynthetic chain and possibly in a chloroplast respiratory chain. The immediate electron acceptor for the enzyme in this species is believed to be plastoquinone. Couples the redox reaction to proton translocation, and thus conserves the redox energy in a proton gradient. This chain is NAD(P)H-quinone oxidoreductase subunit I, chloroplastic, found in Arabidopsis thaliana (Mouse-ear cress).